Consider the following 529-residue polypeptide: Peptide chain release factor 3 (529 aa).

A tr-type G domain is found at 11 to 280 (NKRRTFAIIS…GLTKWAPTPL (270 aa)). Residues 20-27 (SHPDAGKT), 88-92 (DTPGH), and 142-145 (NKCD) each bind GTP.

It belongs to the TRAFAC class translation factor GTPase superfamily. Classic translation factor GTPase family. PrfC subfamily.

Its subcellular location is the cytoplasm. Increases the formation of ribosomal termination complexes and stimulates activities of RF-1 and RF-2. It binds guanine nucleotides and has strong preference for UGA stop codons. It may interact directly with the ribosome. The stimulation of RF-1 and RF-2 is significantly reduced by GTP and GDP, but not by GMP. The protein is Peptide chain release factor 3 of Pseudoalteromonas translucida (strain TAC 125).